The chain runs to 211 residues: Protein-L-isoaspartate O-methyltransferase (211 aa).

The active site involves serine 62.

The protein belongs to the methyltransferase superfamily. L-isoaspartyl/D-aspartyl protein methyltransferase family.

Its subcellular location is the cytoplasm. The catalysed reaction is [protein]-L-isoaspartate + S-adenosyl-L-methionine = [protein]-L-isoaspartate alpha-methyl ester + S-adenosyl-L-homocysteine. Functionally, catalyzes the methyl esterification of L-isoaspartyl residues in peptides and proteins that result from spontaneous decomposition of normal L-aspartyl and L-asparaginyl residues. It plays a role in the repair and/or degradation of damaged proteins. This chain is Protein-L-isoaspartate O-methyltransferase, found in Shewanella halifaxensis (strain HAW-EB4).